The sequence spans 80 residues: Phycocyanin-645 alpha-1 chain (80 aa).

Position 16 (R16) interacts with (2R,3E)-phycocyanobilin. The mesobiliverdin site is built by C18, Q24, Y25, and K40. P71 and I73 together coordinate 15,16-dihydrobiliverdin.

The protein belongs to the phycoerythrin family. As to quaternary structure, heterotetramer of 2 different alpha chains and 2 identical beta chains which form 2 alpha-beta heterodimers within the heterotetramer. Contains one phycocyanobilin chromophore, one mesobiliverdin chromophore and one 15,16-dihydrobiliverdin chromophore with binding mediated by both the alpha and beta subunits.

The protein resides in the plastid. Its subcellular location is the chloroplast thylakoid membrane. Functionally, light-harvesting photosynthetic tetrapyrrole chromophore-protein from the phycobiliprotein complex. This is Phycocyanin-645 alpha-1 chain from Chroomonas sp.